The following is a 130-amino-acid chain: Flagellar assembly factor FliW (130 aa).

The protein belongs to the FliW family. As to quaternary structure, interacts with translational regulator CsrA and flagellin(s).

The protein localises to the cytoplasm. Functionally, acts as an anti-CsrA protein, binds CsrA and prevents it from repressing translation of its target genes, one of which is flagellin. Binds to flagellin and participates in the assembly of the flagellum. This chain is Flagellar assembly factor FliW, found in Borreliella burgdorferi (strain ATCC 35210 / DSM 4680 / CIP 102532 / B31) (Borrelia burgdorferi).